Here is a 430-residue protein sequence, read N- to C-terminus: MIQIVTVRSGDSVYSLASKYGSTPDEIVKDNGLNPAETLVVGQALIVNTKGNNYYVQPGDSLYRISQTYNVPLASLAKVNNLSLKSILHVGQQLYVPKGTKRAVESIAYLQPSTIPIKESLVNATRAINPFLTYLAYFSFEAKRDGTLKEPTETAKIANIATQGKTIPMLVITNIENGNFSADLTSVILRDATIQNKFITNILQTAQKYGMRDIHFDFESVAPEDREAYNRFLRNVKTRLPSGYTLSTTLVPKTSSNQKGKFFEAHDYKAQGQIVDFVVNMTYDWGWQGGPPMAISPIGPVKEVLQYAKSQMPPQKIMMGQNLYGFDWKLPFKQGNPPAKAISSVAAVALARKYNVPIRYDFTAQAPHFNYFDENGVQHEVWFEDSRSVQSKFNLMKEQGIGGISYWKIGLPFPQNWRLLVENFTITKKG.

LysM domains are found at residues 3 to 47 and 52 to 96; these read QIVT…ALIV and NNYY…QLYV. One can recognise a GH18 domain in the interval 104–430; that stretch reads VESIAYLQPS…VENFTITKKG (327 aa). The Proton donor role is filled by Glu219.

The protein belongs to the glycosyl hydrolase 18 family. Chitinase class II subfamily.

It is found in the spore cortex. With respect to regulation, inhibited by diethylpyrocarbonate. N-acetylglucosaminidase involved in cortex peptidoglycan degradation during germination. Cleaves only partially degraded spore peptidoglycans. Recognizes muramic acid delta-lactam residues specific to spore peptidoglycans. This chain is Cortical fragment-lytic enzyme, found in Bacillus cereus.